The following is a 356-amino-acid chain: Tyrosine recombinase XerS (356 aa).

The Core-binding (CB) domain maps to 16-121 (IMPWYVLEYY…ALSSLYKYLT (106 aa)). In terms of domain architecture, Tyr recombinase spans 169 to 354 (GFLTYIDQEY…VNDEQKNALD (186 aa)). Catalysis depends on residues R210, K234, H306, R309, and H332. Y341 functions as the O-(3'-phospho-DNA)-tyrosine intermediate in the catalytic mechanism.

Belongs to the 'phage' integrase family. XerS subfamily.

It localises to the cytoplasm. FtsK is required for recombination. Site-specific tyrosine recombinase, which acts by catalyzing the cutting and rejoining of the recombining DNA molecules. Essential to convert dimers of the bacterial chromosome into monomers to permit their segregation at cell division. This chain is Tyrosine recombinase XerS, found in Streptococcus pneumoniae (strain Hungary19A-6).